We begin with the raw amino-acid sequence, 89 residues long: Small ribosomal subunit protein uS15 (89 aa).

This sequence belongs to the universal ribosomal protein uS15 family. In terms of assembly, part of the 30S ribosomal subunit. Forms a bridge to the 50S subunit in the 70S ribosome, contacting the 23S rRNA.

Functionally, one of the primary rRNA binding proteins, it binds directly to 16S rRNA where it helps nucleate assembly of the platform of the 30S subunit by binding and bridging several RNA helices of the 16S rRNA. Its function is as follows. Forms an intersubunit bridge (bridge B4) with the 23S rRNA of the 50S subunit in the ribosome. The polypeptide is Small ribosomal subunit protein uS15 (Pectobacterium atrosepticum (strain SCRI 1043 / ATCC BAA-672) (Erwinia carotovora subsp. atroseptica)).